The chain runs to 571 residues: Gag-Pro polyprotein (571 aa).

G2 is lipidated: N-myristoyl glycine; by host. The short motif at 100–103 (PPPY) is the PPXY motif element. 2 repeats span residues 342 to 362 (PPGP…CPTK) and 367 to 387 (PPGP…CPTL). 2 consecutive CCHC-type zinc fingers follow at residues 345 to 362 (PCYR…CPTK) and 370 to 387 (PCPI…CPTL). The active-site Protease; shared with dimeric partner is the T453.

In terms of assembly, homodimer; the homodimers are part of the immature particles. Interacts with human TSG101 and NEDD4; these interactions are essential for budding and release of viral particles. As to quaternary structure, homodimer; further assembles as homohexamers. Post-translationally, specific enzymatic cleavages by the viral protease yield mature proteins. The polyprotein is cleaved during and after budding, this process is termed maturation. The protease is autoproteolytically processed at its N- and C-termini. In terms of processing, myristoylated. Myristoylation of the matrix (MA) domain mediates the transport and binding of Gag polyproteins to the host plasma membrane and is required for the assembly of viral particles.

Its subcellular location is the virion. The matrix domain targets Gag, Gag-Pro and Gag-Pro-Pol polyproteins to the plasma membrane via a multipartite membrane binding signal, that includes its myristoylated N-terminus. In terms of biological role, matrix protein. Functionally, forms the spherical core of the virus that encapsulates the genomic RNA-nucleocapsid complex. Its function is as follows. Binds strongly to viral nucleic acids and promote their aggregation. Also destabilizes the nucleic acids duplexes via highly structured zinc-binding motifs. The aspartyl protease mediates proteolytic cleavages of Gag and Gag-Pol polyproteins during or shortly after the release of the virion from the plasma membrane. Cleavages take place as an ordered, step-wise cascade to yield mature proteins. This process is called maturation. Displays maximal activity during the budding process just prior to particle release from the cell. The chain is Gag-Pro polyprotein from Bovine leukemia virus (isolate Japanese BLV-1) (BLV).